The chain runs to 967 residues: Isoleucine--tRNA ligase 2 (967 aa).

The 'HIGH' region motif lies at 58-68 (PYANGDIHIGH). Over residues 437-446 (AVTEEAGATG) the composition is skewed to low complexity. The tract at residues 437–466 (AVTEEAGATGEARKVGKAEEAEEAGPAKTL) is disordered. Residue Glu-598 coordinates L-isoleucyl-5'-AMP. The 'KMSKS' region signature appears at 639 to 643 (KMSKS). Lys-642 provides a ligand contact to ATP. Zn(2+)-binding residues include Cys-922, Cys-925, Cys-942, and Cys-945.

The protein belongs to the class-I aminoacyl-tRNA synthetase family. IleS type 1 subfamily. Monomer. Requires Zn(2+) as cofactor.

It localises to the cytoplasm. The enzyme catalyses tRNA(Ile) + L-isoleucine + ATP = L-isoleucyl-tRNA(Ile) + AMP + diphosphate. Its function is as follows. Catalyzes the attachment of isoleucine to tRNA(Ile). As IleRS can inadvertently accommodate and process structurally similar amino acids such as valine, to avoid such errors it has two additional distinct tRNA(Ile)-dependent editing activities. One activity is designated as 'pretransfer' editing and involves the hydrolysis of activated Val-AMP. The other activity is designated 'posttransfer' editing and involves deacylation of mischarged Val-tRNA(Ile). The chain is Isoleucine--tRNA ligase 2 from Burkholderia mallei (strain ATCC 23344).